We begin with the raw amino-acid sequence, 97 residues long: Acylphosphatase (97 aa).

One can recognise an Acylphosphatase-like domain in the interval 7-97 (RLTAWVHGHV…QERFEGFVER (91 aa)). Active-site residues include R22 and N40.

It belongs to the acylphosphatase family.

It carries out the reaction an acyl phosphate + H2O = a carboxylate + phosphate + H(+). This chain is Acylphosphatase (acyP), found in Mycobacterium avium (strain 104).